The primary structure comprises 191 residues: Ribonuclease HII (191 aa).

One can recognise an RNase H type-2 domain in the interval 7-191; sequence ILMAGVDEVG…YSPVADLISK (185 aa). Positions 13, 14, and 103 each coordinate a divalent metal cation.

This sequence belongs to the RNase HII family. Mn(2+) is required as a cofactor. It depends on Mg(2+) as a cofactor.

Its subcellular location is the cytoplasm. It catalyses the reaction Endonucleolytic cleavage to 5'-phosphomonoester.. In terms of biological role, endonuclease that specifically degrades the RNA of RNA-DNA hybrids. The polypeptide is Ribonuclease HII (Legionella pneumophila (strain Corby)).